Reading from the N-terminus, the 102-residue chain is Small ribosomal subunit protein uS10 (102 aa).

The protein belongs to the universal ribosomal protein uS10 family. Part of the 30S ribosomal subunit.

Its function is as follows. Involved in the binding of tRNA to the ribosomes. This is Small ribosomal subunit protein uS10 from Bifidobacterium longum subsp. infantis (strain ATCC 15697 / DSM 20088 / JCM 1222 / NCTC 11817 / S12).